The chain runs to 695 residues: GATA zinc finger domain-containing protein 16 (695 aa).

Disordered regions lie at residues 82-111, 134-304, and 422-472; these read SPIL…SNNA, VVNS…QQDK, and NNQF…KMRY. Composition is skewed to low complexity over residues 87-111 and 140-149; these read SQQQ…SNNA and KTTTTNNKPP. A coiled-coil region spans residues 150–174; the sequence is KQSKRKEKERLEEEKQTVAQQQQYQ. Residues 155 to 165 show a composition bias toward basic and acidic residues; that stretch reads KEKERLEEEKQ. The segment covering 199 to 209 has biased composition (polar residues); the sequence is VSTTPYGNSQF. The segment covering 210–298 has biased composition (low complexity); that stretch reads NNNNNNNNNN…NSNSNNNNNN (89 aa). Polar residues predominate over residues 422-433; it reads NNQFSGDKQSAL. The span at 434–446 shows a compositional bias: low complexity; sequence NNVKNSKGGNTNN. The GATA-type zinc finger occupies 479-504; it reads CHTCGVTNTPEWRRGPNGAKTLCNAC. The disordered stretch occupies residues 523 to 646; that stretch reads NSTGVNITEP…TTNSITTPTT (124 aa). 2 stretches are compositionally biased toward low complexity: residues 544–556 and 564–646; these read DNNN…SDSN and GSNN…TPTT.

The polypeptide is GATA zinc finger domain-containing protein 16 (gtaP) (Dictyostelium discoideum (Social amoeba)).